Here is a 346-residue protein sequence, read N- to C-terminus: UPF0065 protein in the TAR-I ttuE-ttuC' intergenic region (346 aa).

Positions 1-46 are cleaved as a signal peptide; the sequence is MQASMLDSQWRLTIFSPRRKVKVSQMNSRFIAVLLTATILPWVAQA.

The protein belongs to the UPF0065 (bug) family.

It is found in the periplasm. In Agrobacterium vitis (Rhizobium vitis), this protein is UPF0065 protein in the TAR-I ttuE-ttuC' intergenic region.